Consider the following 475-residue polypeptide: ATP synthase subunit beta, chloroplastic (475 aa).

Residue 156–163 (GGAGVGKT) participates in ATP binding.

Belongs to the ATPase alpha/beta chains family. In terms of assembly, F-type ATPases have 2 components, CF(1) - the catalytic core - and CF(0) - the membrane proton channel. CF(1) has five subunits: alpha(3), beta(3), gamma(1), delta(1), epsilon(1). CF(0) has four main subunits: a(1), b(1), b'(1) and c(9-12).

It localises to the plastid. The protein localises to the chloroplast thylakoid membrane. It carries out the reaction ATP + H2O + 4 H(+)(in) = ADP + phosphate + 5 H(+)(out). Produces ATP from ADP in the presence of a proton gradient across the membrane. The catalytic sites are hosted primarily by the beta subunits. This Gracilaria tenuistipitata var. liui (Red alga) protein is ATP synthase subunit beta, chloroplastic.